Here is a 256-residue protein sequence, read N- to C-terminus: Triosephosphate isomerase (256 aa).

12–14 (NWK) contributes to the substrate binding site. Histidine 99 functions as the Electrophile in the catalytic mechanism. Glutamate 171 acts as the Proton acceptor in catalysis. Substrate-binding positions include glycine 177, serine 217, and 238-239 (GG).

This sequence belongs to the triosephosphate isomerase family. Homodimer.

The protein localises to the cytoplasm. It catalyses the reaction D-glyceraldehyde 3-phosphate = dihydroxyacetone phosphate. The protein operates within carbohydrate biosynthesis; gluconeogenesis. It participates in carbohydrate degradation; glycolysis; D-glyceraldehyde 3-phosphate from glycerone phosphate: step 1/1. In terms of biological role, involved in the gluconeogenesis. Catalyzes stereospecifically the conversion of dihydroxyacetone phosphate (DHAP) to D-glyceraldehyde-3-phosphate (G3P). The polypeptide is Triosephosphate isomerase (Rubrobacter xylanophilus (strain DSM 9941 / JCM 11954 / NBRC 16129 / PRD-1)).